Consider the following 683-residue polypeptide: UvrABC system protein B (683 aa).

The Helicase ATP-binding domain occupies 31-414 (AGFEKGYKEQ…ELERTDHKVE (384 aa)). 44-51 (GATGTGKT) contacts ATP. Positions 97 to 120 (YYDYYQPEAYVPQSDTYIEKDSAI) match the Beta-hairpin motif. The Helicase C-terminal domain occupies 435–601 (QIDDLVGEIN…TIIKPVHDVI (167 aa)). A UVR domain is found at 632 to 667 (KTMIKNLQEQMKEAAKKLDFEEAANLRDAIMELQSS). The segment at 662–683 (MELQSSSRRPKTRKGKALNGKR) is disordered. Residues 669-683 (RRPKTRKGKALNGKR) show a composition bias toward basic residues.

This sequence belongs to the UvrB family. Forms a heterotetramer with UvrA during the search for lesions. Interacts with UvrC in an incision complex.

It is found in the cytoplasm. Its function is as follows. The UvrABC repair system catalyzes the recognition and processing of DNA lesions. A damage recognition complex composed of 2 UvrA and 2 UvrB subunits scans DNA for abnormalities. Upon binding of the UvrA(2)B(2) complex to a putative damaged site, the DNA wraps around one UvrB monomer. DNA wrap is dependent on ATP binding by UvrB and probably causes local melting of the DNA helix, facilitating insertion of UvrB beta-hairpin between the DNA strands. Then UvrB probes one DNA strand for the presence of a lesion. If a lesion is found the UvrA subunits dissociate and the UvrB-DNA preincision complex is formed. This complex is subsequently bound by UvrC and the second UvrB is released. If no lesion is found, the DNA wraps around the other UvrB subunit that will check the other stand for damage. This Lactobacillus acidophilus (strain ATCC 700396 / NCK56 / N2 / NCFM) protein is UvrABC system protein B.